We begin with the raw amino-acid sequence, 205 residues long: Holliday junction branch migration complex subunit RuvA (205 aa).

Residues Met1–Ile64 are domain I. The domain II stretch occupies residues Thr65–Glu143. The tract at residues Arg144 to Pro156 is flexible linker. The interval Thr157–Leu205 is domain III.

It belongs to the RuvA family. As to quaternary structure, homotetramer. Forms an RuvA(8)-RuvB(12)-Holliday junction (HJ) complex. HJ DNA is sandwiched between 2 RuvA tetramers; dsDNA enters through RuvA and exits via RuvB. An RuvB hexamer assembles on each DNA strand where it exits the tetramer. Each RuvB hexamer is contacted by two RuvA subunits (via domain III) on 2 adjacent RuvB subunits; this complex drives branch migration. In the full resolvosome a probable DNA-RuvA(4)-RuvB(12)-RuvC(2) complex forms which resolves the HJ.

The protein resides in the cytoplasm. Its function is as follows. The RuvA-RuvB-RuvC complex processes Holliday junction (HJ) DNA during genetic recombination and DNA repair, while the RuvA-RuvB complex plays an important role in the rescue of blocked DNA replication forks via replication fork reversal (RFR). RuvA specifically binds to HJ cruciform DNA, conferring on it an open structure. The RuvB hexamer acts as an ATP-dependent pump, pulling dsDNA into and through the RuvAB complex. HJ branch migration allows RuvC to scan DNA until it finds its consensus sequence, where it cleaves and resolves the cruciform DNA. This chain is Holliday junction branch migration complex subunit RuvA, found in Shewanella sp. (strain MR-4).